The primary structure comprises 90 residues: 10 kDa anti-sigma factor (90 aa).

In terms of assembly, interacts with the host sigma factor RpoD, and thereby inhibits its interaction with the catalytic core of the host RNA polymerase.

Transcriptional inhibitor. Inhibits sigma 70-directed transcription by weakening its interaction with the core of the host's RNA polymerase. This allows Gp55 to successfully compete for the core enzyme. Plays an important role during the prereplicative period of phage T4 development. In Enterobacteria phage T4 (Bacteriophage T4), this protein is 10 kDa anti-sigma factor (asiA).